A 446-amino-acid polypeptide reads, in one-letter code: Adenylosuccinate synthetase (446 aa).

GTP contacts are provided by residues 12 to 18 (GDEGKGK) and 40 to 42 (GHT). Aspartate 13 functions as the Proton acceptor in the catalytic mechanism. Positions 13 and 40 each coordinate Mg(2+). Residues 13–16 (DEGK), 38–41 (NAGH), threonine 128, arginine 142, glutamine 223, threonine 238, and arginine 302 contribute to the IMP site. Residue histidine 41 is the Proton donor of the active site. Substrate is bound at residue 298-304 (TTTGRRR). Residues arginine 304, 330-332 (KLD), and 412-414 (SLG) each bind GTP.

Belongs to the adenylosuccinate synthetase family. As to quaternary structure, homodimer. Requires Mg(2+) as cofactor.

It is found in the cytoplasm. It catalyses the reaction IMP + L-aspartate + GTP = N(6)-(1,2-dicarboxyethyl)-AMP + GDP + phosphate + 2 H(+). The protein operates within purine metabolism; AMP biosynthesis via de novo pathway; AMP from IMP: step 1/2. Functionally, plays an important role in the de novo pathway of purine nucleotide biosynthesis. Catalyzes the first committed step in the biosynthesis of AMP from IMP. In Crocosphaera subtropica (strain ATCC 51142 / BH68) (Cyanothece sp. (strain ATCC 51142)), this protein is Adenylosuccinate synthetase.